A 274-amino-acid polypeptide reads, in one-letter code: Karrikin insensitive 2 receptor IA (274 aa).

Ser95 functions as the Nucleophile in the catalytic mechanism. Residues Asp217 and His246 contribute to the active site.

This sequence belongs to the AB hydrolase superfamily. As to quaternary structure, interacts with MAX2A and MAX2B in the presence of (-)-germacrene D, thus forming an E3 SCF ubiquitin ligase complex (ASK-cullin-F-box) containing MAX2A or MAX2B and KAI2IA recognizing SMAX1A; this leads to the subsequent degradation of the transcriptional corepressor SMAX1A, thus triggering the activation of a downstream signaling cascade. Strongly expressed in stigma.

It localises to the nucleus. Its subcellular location is the cytoplasm. Hydrolysis activity toward yoshimulactone green (YLG), a fluorescent agonist to strigolactone receptor, is inhibited by (-)-germacrene D and GR24, a synthetic strigolactone analog. Hydrolase involved in the olfaction of sesquiterpene volatile organic compounds (VOCs) during volatile plant communication in a MAX2 proteins-dependent manner. Acts as a karrikin-insensitive receptor that stereospecifically perceives and binds to (-)-germacrene D, particularly in stigmas, and triggers a signaling cascade influencing plant fitness, as the result of reproductive organ growth-promoting effect; this process involves an interaction with MAX2 proteins (e.g. MAX2A and MAX2B) and the subsequent degradation of SMAX1a, a transcriptional corepressor. This Petunia hybrida (Petunia) protein is Karrikin insensitive 2 receptor IA.